Here is a 282-residue protein sequence, read N- to C-terminus: NADPH-dependent 7-cyano-7-deazaguanine reductase (282 aa).

A substrate-binding site is contributed by 88–90 (IES). An NADPH-binding site is contributed by 90-91 (SK). Cys190 (thioimide intermediate) is an active-site residue. The Proton donor role is filled by Asp197. 229–230 (HE) contacts substrate. 258-259 (RG) is a binding site for NADPH.

It belongs to the GTP cyclohydrolase I family. QueF type 2 subfamily. In terms of assembly, homodimer.

It is found in the cytoplasm. The enzyme catalyses 7-aminomethyl-7-carbaguanine + 2 NADP(+) = 7-cyano-7-deazaguanine + 2 NADPH + 3 H(+). The protein operates within tRNA modification; tRNA-queuosine biosynthesis. Its function is as follows. Catalyzes the NADPH-dependent reduction of 7-cyano-7-deazaguanine (preQ0) to 7-aminomethyl-7-deazaguanine (preQ1). The protein is NADPH-dependent 7-cyano-7-deazaguanine reductase of Pectobacterium carotovorum subsp. carotovorum (strain PC1).